A 368-amino-acid polypeptide reads, in one-letter code: MARALRDISLFNDIRKDQNSAGAKHERYNMRDLRSKKNQHVNGIDDYEDDSLDRFIRRKKSRVVKYIPSLSAYNVFNEFPYYPTSASQLLDGKLDEFLMLSEQYKSRLPKIRKLGWNRFKPIGINKTMYELEMLRSRARAQNAEGNNEEDFRQHDSREEDPRNNGSIGRVILPHILQENEEYDTGEGVTGLHSMPNDSMAILANNSANNSQNEEVSEEDEISYDYDAEFDHVVDEDDNEEGEVPGEGVEGIEVQRERIVPDDLLMRPTSLSRSLQQFVEEAHHLDRNPYDIDSDNDGEDSKVELDMNPDFEDDVGREHDYNSEYSQEPTSYGGITPDLASNWRNWTRERITSLDELMERRARQQRGQD.

Disordered regions lie at residues 140 to 167 (AQNAEGNNEEDFRQHDSREEDPRNNGSI) and 286 to 336 (RNPY…GITP). Residues 149-162 (EDFRQHDSREEDPR) show a composition bias toward basic and acidic residues. Residue serine 293 is modified to Phosphoserine.

The protein belongs to the APC15 family. In terms of assembly, the APC/C is composed of at least 13 subunits that stay tightly associated throughout the cell cycle: APC1, APC2, APC4, APC5, APC9, APC11, CDC16, CDC23, CDC26, CDC27, DOC1, MND2 and SWM1. MND2 interacts directly with APC1, APC5 and CDC23.

It participates in protein modification; protein ubiquitination. Its function is as follows. Component of the anaphase promoting complex/cyclosome (APC/C), a cell cycle-regulated E3 ubiquitin-protein ligase complex that controls progression through mitosis and the G1 phase of the cell cycle. The APC/C is thought to confer substrate specificity and, in the presence of ubiquitin-conjugating E2 enzymes, it catalyzes the formation of protein-ubiquitin conjugates that are subsequently degraded by the 26S proteasome. In early mitosis, the APC/C is activated by CDC20 and targets securin PDS1, the B-type cyclin CLB5, and other anaphase inhibitory proteins for proteolysis, thereby triggering the separation of sister chromatids at the metaphase-to-anaphase transition. In late mitosis and in G1, degradation of CLB5 allows activation of the APC/C by CDH1, which is needed to destroy CDC20 and the B-type cyclin CLB2 to allow exit from mitosis and creating the low CDK state necessary for cytokinesis and for reforming prereplicative complexes in G1 prior to another round of replication. This chain is Anaphase-promoting complex subunit MND2 (MND2), found in Saccharomyces cerevisiae (strain ATCC 204508 / S288c) (Baker's yeast).